The sequence spans 876 residues: Leucine--tRNA ligase (876 aa).

A 'HIGH' region motif is present at residues 42-52 (PYPSGKLHMGH). Positions 634 to 638 (KMSKS) match the 'KMSKS' region motif. ATP is bound at residue Lys637.

This sequence belongs to the class-I aminoacyl-tRNA synthetase family.

The protein localises to the cytoplasm. It catalyses the reaction tRNA(Leu) + L-leucine + ATP = L-leucyl-tRNA(Leu) + AMP + diphosphate. The sequence is that of Leucine--tRNA ligase from Neisseria meningitidis serogroup C / serotype 2a (strain ATCC 700532 / DSM 15464 / FAM18).